Reading from the N-terminus, the 499-residue chain is NAD(P)H-quinone oxidoreductase chain 4, chloroplastic (499 aa).

14 helical membrane-spanning segments follow: residues 4–24 (FPWLTLIVVFPIAAGSLIFFL), 35–55 (YTIYICVLELLLTTYAFCYNF), 84–104 (GLSIGPILLTGFITTLATLAA), 111–129 (SRLFHFLMLAMYSGQIGSF), 134–154 (LLLFFIMWELELIPVYLLLSV), 167–187 (FILYTAGGSVFLLIGVLGIGL), 208–228 (ALEIIFYIGFFIAFAVKLPII), 242–262 (HYSTCMLLAGILLKMGAYGLI), 272–292 (AHSIFSPWFMIVGTVQIIYAA), 305–325 (IAYSSVSHMGFIILGIGSITD), 330–350 (GAVLQIISHGLISAALFFLAG), 386–406 (LALPGMSGFVAELIVFFGIIT), 416–436 (IVITFVMAIGMILTPIYSLSM), and 462–482 (LFVLISILLPVIGIGIYPDFV).

This sequence belongs to the complex I subunit 4 family.

Its subcellular location is the plastid. The protein resides in the chloroplast thylakoid membrane. It catalyses the reaction a plastoquinone + NADH + (n+1) H(+)(in) = a plastoquinol + NAD(+) + n H(+)(out). It carries out the reaction a plastoquinone + NADPH + (n+1) H(+)(in) = a plastoquinol + NADP(+) + n H(+)(out). This Citrus sinensis (Sweet orange) protein is NAD(P)H-quinone oxidoreductase chain 4, chloroplastic.